Reading from the N-terminus, the 157-residue chain is Protein Smg homolog (157 aa).

The protein belongs to the Smg family.

This chain is Protein Smg homolog, found in Shewanella pealeana (strain ATCC 700345 / ANG-SQ1).